The primary structure comprises 385 residues: Prophage integrase IntS (385 aa).

The 82-residue stretch at 91 to 172 (NSFSAIYKEW…RCGEVFRYAI (82 aa)) folds into the Core-binding (CB) domain. A Tyr recombinase domain is found at 195–373 (KNFPFLPADQ…QYLDKRREMM (179 aa)). Residues Arg-234, Lys-261, His-324, Arg-327, and His-350 contribute to the active site. Catalysis depends on Tyr-360, which acts as the O-(3'-phospho-DNA)-tyrosine intermediate.

This sequence belongs to the 'phage' integrase family.

Functionally, integrase is necessary for integration of the phage into the host genome by site-specific recombination. In conjunction with excisionase, integrase is also necessary for excision of the prophage from the host genome. This chain is Prophage integrase IntS (intS), found in Escherichia coli (strain K12).